Consider the following 37-residue polypeptide: Potassium channel toxin alpha-KTx 11.1 (37 aa).

3 disulfides stabilise this stretch: Cys-8/Cys-27, Cys-13/Cys-33, and Cys-17/Cys-35.

It belongs to the short scorpion toxin superfamily. Potassium channel inhibitor family. Alpha-KTx 11 subfamily. As to expression, expressed by the venom gland.

The protein localises to the secreted. Binds and inhibits voltage-sensitive potassium channels. Inhibits the vertebrate potassium channels Kv1.1/KCNA1, Kv1.2/KCNA2 and Kv1.3/KCNA3 with low affinity. Also weakly inhibits Kv7.1/KCNQ1 (10 uM of the toxin inhibits currents by 21.43%). The protein is Potassium channel toxin alpha-KTx 11.1 of Parabuthus villosus (Black hairy thick-tailed scorpion).